Reading from the N-terminus, the 216-residue chain is Eukaryotic translation initiation factor isoform 4E-2 (216 aa).

The interval 1-23 is disordered; that stretch reads MAEVEAPATAVEAPAAAVATTTP. Cys-113 and Cys-152 are disulfide-bonded.

The protein belongs to the eukaryotic initiation factor 4E family. In terms of assembly, EIF4F is a multi-subunit complex, the composition of which varies with external and internal environmental conditions. It is composed of at least EIF4A, EIF4E and EIF4G. EIF4E is also known to interact with other partners. In higher plants two isoforms of EIF4F have been identified, named isoform EIF4F and isoform EIF(iso)4F. Isoform EIF4F has subunits p220 and p26, whereas isoform EIF(iso)4F has subunits p82 and p28. According to the redox status, the Cys-113-Cys-152 disulfide bridge may have a role in regulating protein function by affecting its ability to bind capped mRNA.

In terms of biological role, recognizes and binds the 7-methylguanosine-containing mRNA cap during an early step in the initiation of protein synthesis and facilitates ribosome binding by inducing the unwinding of the mRNAs secondary structures. The chain is Eukaryotic translation initiation factor isoform 4E-2 from Zea mays (Maize).